A 360-amino-acid polypeptide reads, in one-letter code: UDP-N-acetylglucosamine--N-acetylmuramyl-(pentapeptide) pyrophosphoryl-undecaprenol N-acetylglucosamine transferase (360 aa).

UDP-N-acetyl-alpha-D-glucosamine is bound by residues threonine 15 to glycine 17, asparagine 127, arginine 163, serine 191, isoleucine 249, alanine 268 to glutamate 273, and glutamine 293.

It belongs to the glycosyltransferase 28 family. MurG subfamily.

It localises to the cell inner membrane. The catalysed reaction is di-trans,octa-cis-undecaprenyl diphospho-N-acetyl-alpha-D-muramoyl-L-alanyl-D-glutamyl-meso-2,6-diaminopimeloyl-D-alanyl-D-alanine + UDP-N-acetyl-alpha-D-glucosamine = di-trans,octa-cis-undecaprenyl diphospho-[N-acetyl-alpha-D-glucosaminyl-(1-&gt;4)]-N-acetyl-alpha-D-muramoyl-L-alanyl-D-glutamyl-meso-2,6-diaminopimeloyl-D-alanyl-D-alanine + UDP + H(+). It participates in cell wall biogenesis; peptidoglycan biosynthesis. Cell wall formation. Catalyzes the transfer of a GlcNAc subunit on undecaprenyl-pyrophosphoryl-MurNAc-pentapeptide (lipid intermediate I) to form undecaprenyl-pyrophosphoryl-MurNAc-(pentapeptide)GlcNAc (lipid intermediate II). This Proteus mirabilis (strain HI4320) protein is UDP-N-acetylglucosamine--N-acetylmuramyl-(pentapeptide) pyrophosphoryl-undecaprenol N-acetylglucosamine transferase.